A 349-amino-acid polypeptide reads, in one-letter code: Small ribosomal subunit protein eS6 (349 aa).

The tract at residues 224 to 349 (RRRSRLSSMR…AKKEKKQKKK (126 aa)) is disordered. 2 stretches are compositionally biased toward basic and acidic residues: residues 231 to 251 (SMRD…EKAA) and 260 to 334 (KKEA…EAAK).

It belongs to the eukaryotic ribosomal protein eS6 family. As to quaternary structure, component of the small ribosomal subunit. Part of the small subunit (SSU) processome, composed of more than 70 proteins and the RNA chaperone small nucleolar RNA (snoRNA) U3. In terms of processing, ribosomal protein S6 is the major substrate of protein kinases in eukaryote ribosomes.

It is found in the cytoplasm. Its subcellular location is the nucleus. The protein resides in the nucleolus. Component of the 40S small ribosomal subunit. Plays an important role in controlling cell growth and proliferation through the selective translation of particular classes of mRNA. Part of the small subunit (SSU) processome, first precursor of the small eukaryotic ribosomal subunit. During the assembly of the SSU processome in the nucleolus, many ribosome biogenesis factors, an RNA chaperone and ribosomal proteins associate with the nascent pre-rRNA and work in concert to generate RNA folding, modifications, rearrangements and cleavage as well as targeted degradation of pre-ribosomal RNA by the RNA exosome. The protein is Small ribosomal subunit protein eS6 (RpS6) of Aedes albopictus (Asian tiger mosquito).